The sequence spans 25 residues: Pregnancy-associated glycoprotein 72 (25 aa).

2 N-linked (GlcNAc...) asparagine glycosylation sites follow: N4 and N21.

Belongs to the peptidase A1 family. Post-translationally, N-glycosylated. In terms of tissue distribution, expressed in chorionic epithelium (trophectoderm).

It localises to the secreted. The protein resides in the extracellular space. The polypeptide is Pregnancy-associated glycoprotein 72 (Bison bison (American bison)).